The sequence spans 918 residues: Isoleucine--tRNA ligase 1 (918 aa).

The short motif at 57-67 is the 'HIGH' region element; sequence PYANGDIHIGH. An L-isoleucyl-5'-AMP-binding site is contributed by Glu-553. A 'KMSKS' region motif is present at residues 594–598; that stretch reads KMSKS. Lys-597 lines the ATP pocket. Zn(2+) contacts are provided by Cys-885, Cys-888, Cys-905, and Cys-908.

Belongs to the class-I aminoacyl-tRNA synthetase family. IleS type 1 subfamily. Monomer. Zn(2+) serves as cofactor.

The protein resides in the cytoplasm. The enzyme catalyses tRNA(Ile) + L-isoleucine + ATP = L-isoleucyl-tRNA(Ile) + AMP + diphosphate. Functionally, catalyzes the attachment of isoleucine to tRNA(Ile). As IleRS can inadvertently accommodate and process structurally similar amino acids such as valine, to avoid such errors it has two additional distinct tRNA(Ile)-dependent editing activities. One activity is designated as 'pretransfer' editing and involves the hydrolysis of activated Val-AMP. The other activity is designated 'posttransfer' editing and involves deacylation of mischarged Val-tRNA(Ile). The polypeptide is Isoleucine--tRNA ligase 1 (Oceanobacillus iheyensis (strain DSM 14371 / CIP 107618 / JCM 11309 / KCTC 3954 / HTE831)).